We begin with the raw amino-acid sequence, 192 residues long: uncharacterized protein (192 aa).

Residues proline 168–alanine 192 are disordered. Positions threonine 182–alanine 192 are enriched in polar residues.

This sequence to A.xylinum IS1268 ORFA.

This is an uncharacterized protein from Sinorhizobium fredii (strain NBRC 101917 / NGR234).